The primary structure comprises 156 residues: Ribosomal RNA large subunit methyltransferase H (156 aa).

S-adenosyl-L-methionine-binding positions include Leu-73, Gly-104, and 123-128 (LSPLTL).

It belongs to the RNA methyltransferase RlmH family. In terms of assembly, homodimer.

It localises to the cytoplasm. It catalyses the reaction pseudouridine(1915) in 23S rRNA + S-adenosyl-L-methionine = N(3)-methylpseudouridine(1915) in 23S rRNA + S-adenosyl-L-homocysteine + H(+). Functionally, specifically methylates the pseudouridine at position 1915 (m3Psi1915) in 23S rRNA. The chain is Ribosomal RNA large subunit methyltransferase H from Marinobacter nauticus (strain ATCC 700491 / DSM 11845 / VT8) (Marinobacter aquaeolei).